Reading from the N-terminus, the 362-residue chain is S-adenosylmethionine:tRNA ribosyltransferase-isomerase (362 aa).

Belongs to the QueA family. In terms of assembly, monomer.

It localises to the cytoplasm. It catalyses the reaction 7-aminomethyl-7-carbaguanosine(34) in tRNA + S-adenosyl-L-methionine = epoxyqueuosine(34) in tRNA + adenine + L-methionine + 2 H(+). Its pathway is tRNA modification; tRNA-queuosine biosynthesis. In terms of biological role, transfers and isomerizes the ribose moiety from AdoMet to the 7-aminomethyl group of 7-deazaguanine (preQ1-tRNA) to give epoxyqueuosine (oQ-tRNA). This Syntrophus aciditrophicus (strain SB) protein is S-adenosylmethionine:tRNA ribosyltransferase-isomerase.